The following is a 732-amino-acid chain: MSSPGNSGVAIDSTVLKAIELGTRLFKSGEYLQAKRIFTNALRVCDSYSQEQIMRIRNAYQLDTARPDNKRLYHPRYIKILDNICACYEKLNDLKSCLDVSQRLLKLEPGNIKCYIRCTRTLIKLKDWKRAYKTCSRGLQLCNNDSNHLRQQKQFIKNNMVQKQDGKRSYIDPLEETKIAKKKKNNNVLESLPKKKIKGSTKKTDLVGNLPIEILPIIFQRFTTKELVTLSLVCNKWRDKILYHLDCFQEFNLAPINFKNFVKFMDFLQQNFTRTYRKYILSQVKVSSRITSEELRITQLLFSKMPKCINIERLILSMPTLTTTQIFKLMVRGGTDFFTRLLELSLMITYRPDKQHELEILQTCPLLKKIELIFVNSLVPIFDGNNSVGRDGSFNVMARHTNMQISTADNDEQGIVEEKVIYSELEKITLICDKKKIKNFPLCRALLRGQFPLLQKLTITGVTFPMNNQDIMNFQWLLNFPDLKELWIEDNDNCELSKFLQLLKFSNVWKNLEKLTFRENKLYPIVNLDEDQPVTNDDEVPSMLFYKENLQNLEKLDLMGTSISGSALTRLCEQEYLDGRKLRSLNIGNCPNIQFPNNHAHTARMILDVNAVLKRLSKLEEINLSHLSSLNDSTMKSFIINVPFLENLKRLDISHNFEITGISIYEFLKKFQMDHDNEAGGQPLAYLNIDGCSQVSHITVNMIRAQNLVTQVDCVYERDVWRKFGINSYSYS.

TPR repeat units lie at residues 15–48, 78–111, and 113–145; these read VLKAIELGTRLFKSGEYLQAKRIFTNALRVCDSY, IKILDNICACYEKLNDLKSCLDVSQRLLKLEPGN, and KCYIRCTRTLIKLKDWKRAYKTCSRGLQLCNND. The F-box domain occupies 204 to 251; it reads TDLVGNLPIEILPIIFQRFTTKELVTLSLVCNKWRDKILYHLDCFQEF. Position 393 is a phosphoserine (serine 393). LRR repeat units lie at residues 425–449, 480–505, 509–532, 550–574, 579–602, 616–637, and 645–669; these read LEKITLICDKKKIKNFPLCRALLRG, FPDLKELWIEDNDNCELSKFLQLLKF, WKNLEKLTFRENKLYPIVNLDEDQ, LQNLEKLDLMGTSISGSALTRLCEQ, GRKLRSLNIGNCPNIQFPNNHAHT, LSKLEEINLSHLSSLNDSTMKS, and LENLKRLDISHNFEITGISIYEFLK.

Belongs to the DIA2 family. As to quaternary structure, component of the SCF(DIA2) complex containing CDC53, SKP1, RBX1 and DIA2. Interacts with SKP1.

The protein localises to the nucleus. F-box protein component of a SCF (SKP1-CUL1-F-box protein) E3 ubiquitin-protein ligase complex which mediates the ubiquitination and subsequent proteasomal degradation of target proteins. Probably recognizes and binds to phosphorylated target proteins. The SCF(DIA2) complex is specifically involved in the pheromone induced degradation of phosphorylated TEC1. The SCF(DIA2) complex binds to DNA replication origins. Involved in DNA replication, genome stability, and the control of cell cycle, probably through its association to replication origins to facilitate the ubiquitination of another origin-binding protein. Required for invasive growth and growth under alkaline conditions. This chain is Protein DIA2 (DIA2), found in Saccharomyces cerevisiae (strain ATCC 204508 / S288c) (Baker's yeast).